The primary structure comprises 328 residues: DNA-directed RNA polymerase subunit alpha (328 aa).

Residues 1–234 (MQTAVNEFLT…QQLAVFVDLE (234 aa)) are alpha N-terminal domain (alpha-NTD). Residues 248 to 328 (IDPILLRPVD…NWPPASLKND (81 aa)) are alpha C-terminal domain (alpha-CTD).

Belongs to the RNA polymerase alpha chain family. Homodimer. The RNAP catalytic core consists of 2 alpha, 1 beta, 1 beta' and 1 omega subunit. When a sigma factor is associated with the core the holoenzyme is formed, which can initiate transcription.

It carries out the reaction RNA(n) + a ribonucleoside 5'-triphosphate = RNA(n+1) + diphosphate. Functionally, DNA-dependent RNA polymerase catalyzes the transcription of DNA into RNA using the four ribonucleoside triphosphates as substrates. The chain is DNA-directed RNA polymerase subunit alpha from Cellvibrio japonicus (strain Ueda107) (Pseudomonas fluorescens subsp. cellulosa).